A 520-amino-acid polypeptide reads, in one-letter code: Maturase K (520 aa).

This sequence belongs to the intron maturase 2 family. MatK subfamily.

The protein localises to the plastid. It localises to the chloroplast. Usually encoded in the trnK tRNA gene intron. Probably assists in splicing its own and other chloroplast group II introns. The chain is Maturase K from Aspidistra elatior (Cast-iron plant).